A 66-amino-acid chain; its full sequence is Large ribosomal subunit protein bL35 (66 aa).

The protein belongs to the bacterial ribosomal protein bL35 family.

In Lysinibacillus sphaericus (strain C3-41), this protein is Large ribosomal subunit protein bL35.